A 134-amino-acid chain; its full sequence is Profilin-3 (134 aa).

A disulfide bridge links C13 with C118. An Involved in PIP2 interaction motif is present at residues 84–100; the sequence is AVIRGKKGSGGITIKKT. T114 carries the phosphothreonine modification.

This sequence belongs to the profilin family. In terms of assembly, occurs in many kinds of cells as a complex with monomeric actin in a 1:1 ratio. Post-translationally, phosphorylated by MAP kinases.

It localises to the cytoplasm. The protein resides in the cytoskeleton. In terms of biological role, binds to actin and affects the structure of the cytoskeleton. At high concentrations, profilin prevents the polymerization of actin, whereas it enhances it at low concentrations. The chain is Profilin-3 from Olea europaea (Common olive).